The primary structure comprises 714 residues: Calpain-1 catalytic subunit (714 aa).

S2 carries the N-acetylserine modification. Residues 55–354 (LFRDEAFPPV…FTRLEICNLT (300 aa)) enclose the Calpain catalytic domain. Ca(2+) contacts are provided by Q109 and D114. Residues C115, H272, and N296 contribute to the active site. Ca(2+)-binding residues include N316, D318, and D323. T354 carries the post-translational modification Phosphothreonine. The domain III stretch occupies residues 355 to 526 (PDALKSRTIR…KSAGTVELDD (172 aa)). Positions 527-542 (QIQANLPDEQVLSEEE) are linker. 4 consecutive EF-hand domains span residues 541 to 576 (EEID…IISK), 585 to 618 (FSLE…NRIR), 615 to 650 (NRIR…AGFK), and 680 to 714 (VRLE…TMFA). Positions 543-713 (IDENFKALFR…LFKWLQLTMF (171 aa)) are domain IV. Residues D598, D600, N602, K604, E609, D628, D630, S632, S634, and E639 each coordinate Ca(2+).

The protein belongs to the peptidase C2 family. As to quaternary structure, forms a heterodimer with a small (regulatory) subunit CAPNS1. The cofactor is Ca(2+). Undergoes calcium-induced successive autoproteolytic cleavages that generate a membrane-bound 78 kDa active form and an intracellular 75 kDa active form. Calpastatin reduces with high efficiency the transition from 78 kDa to 75 kDa calpain forms. As to expression, ubiquitous.

Its subcellular location is the cytoplasm. It is found in the cell membrane. The catalysed reaction is Broad endopeptidase specificity.. Activated by micromolar concentrations of calcium and inhibited by calpastatin. Its function is as follows. Calcium-regulated non-lysosomal thiol-protease which catalyzes limited proteolysis of substrates involved in cytoskeletal remodeling and signal transduction. Proteolytically cleaves CTBP1 at 'Asn-375', 'Gly-387' and 'His-409'. Cleaves and activates caspase-7 (CASP7). This chain is Calpain-1 catalytic subunit, found in Homo sapiens (Human).